The primary structure comprises 485 residues: Glutamyl-tRNA(Gln) amidotransferase subunit A (485 aa).

Active-site charge relay system residues include K79 and S154. S178 (acyl-ester intermediate) is an active-site residue.

The protein belongs to the amidase family. GatA subfamily. As to quaternary structure, heterotrimer of A, B and C subunits.

It catalyses the reaction L-glutamyl-tRNA(Gln) + L-glutamine + ATP + H2O = L-glutaminyl-tRNA(Gln) + L-glutamate + ADP + phosphate + H(+). In terms of biological role, allows the formation of correctly charged Gln-tRNA(Gln) through the transamidation of misacylated Glu-tRNA(Gln) in organisms which lack glutaminyl-tRNA synthetase. The reaction takes place in the presence of glutamine and ATP through an activated gamma-phospho-Glu-tRNA(Gln). This is Glutamyl-tRNA(Gln) amidotransferase subunit A from Staphylococcus carnosus (strain TM300).